The sequence spans 212 residues: ATP-dependent Clp protease proteolytic subunit (212 aa).

Ser-109 acts as the Nucleophile in catalysis. The active site involves His-134.

Belongs to the peptidase S14 family. In terms of assembly, fourteen ClpP subunits assemble into 2 heptameric rings which stack back to back to give a disk-like structure with a central cavity, resembling the structure of eukaryotic proteasomes.

It localises to the cytoplasm. It carries out the reaction Hydrolysis of proteins to small peptides in the presence of ATP and magnesium. alpha-casein is the usual test substrate. In the absence of ATP, only oligopeptides shorter than five residues are hydrolyzed (such as succinyl-Leu-Tyr-|-NHMec, and Leu-Tyr-Leu-|-Tyr-Trp, in which cleavage of the -Tyr-|-Leu- and -Tyr-|-Trp bonds also occurs).. Functionally, cleaves peptides in various proteins in a process that requires ATP hydrolysis. Has a chymotrypsin-like activity. Plays a major role in the degradation of misfolded proteins. The polypeptide is ATP-dependent Clp protease proteolytic subunit (Bdellovibrio bacteriovorus (strain ATCC 15356 / DSM 50701 / NCIMB 9529 / HD100)).